Consider the following 269-residue polypeptide: tRNA pseudouridine synthase A (269 aa).

The active-site Nucleophile is D51. Y109 contacts substrate.

This sequence belongs to the tRNA pseudouridine synthase TruA family. Homodimer.

The enzyme catalyses uridine(38/39/40) in tRNA = pseudouridine(38/39/40) in tRNA. In terms of biological role, formation of pseudouridine at positions 38, 39 and 40 in the anticodon stem and loop of transfer RNAs. The polypeptide is tRNA pseudouridine synthase A (Aeromonas hydrophila subsp. hydrophila (strain ATCC 7966 / DSM 30187 / BCRC 13018 / CCUG 14551 / JCM 1027 / KCTC 2358 / NCIMB 9240 / NCTC 8049)).